The chain runs to 219 residues: uncharacterized protein (219 aa).

Residues 139 to 154 (PRKIKQKKKTKKKRPS) are compositionally biased toward basic residues. A disordered region spans residues 139 to 160 (PRKIKQKKKTKKKRPSKSAPKT). The 59-residue stretch at 159-217 (KTYTVKKGDTLWDLAGKFYGDSTKWRKIWKVNKKAMIKRSKRNIRQPGHWIFPGQKLKI) folds into the LysM domain.

This is an uncharacterized protein from Bacillus subtilis (strain 168).